Here is a 399-residue protein sequence, read N- to C-terminus: Multi-drug resistance efflux pump PmrA (399 aa).

10 consecutive transmembrane segments (helical) span residues 12–34 (IAWF…MPIF), 49–71 (AGLA…GILA), 84–106 (GLAM…LIFL), 140–162 (LSTG…AELF), 167–186 (VFLL…ICFI), 217–239 (LFLT…ALYV), 248–270 (LLFV…AGVM), 306–328 (LGLY…NALL), 340–362 (VFAF…GSAV), and 366–388 (FGYH…FNLI).

Belongs to the major facilitator superfamily. TCR/Tet family.

Its subcellular location is the cell membrane. Functionally, efflux pump for various substrates. In Streptococcus pneumoniae serotype 4 (strain ATCC BAA-334 / TIGR4), this protein is Multi-drug resistance efflux pump PmrA (pmrA).